Here is a 356-residue protein sequence, read N- to C-terminus: Uroporphyrinogen decarboxylase (356 aa).

Substrate contacts are provided by residues 27-31 (RQAGR), Asp77, Tyr154, Thr209, and His327.

This sequence belongs to the uroporphyrinogen decarboxylase family. Homodimer.

The protein resides in the cytoplasm. The enzyme catalyses uroporphyrinogen III + 4 H(+) = coproporphyrinogen III + 4 CO2. Its pathway is porphyrin-containing compound metabolism; protoporphyrin-IX biosynthesis; coproporphyrinogen-III from 5-aminolevulinate: step 4/4. In terms of biological role, catalyzes the decarboxylation of four acetate groups of uroporphyrinogen-III to yield coproporphyrinogen-III. The protein is Uroporphyrinogen decarboxylase of Hamiltonella defensa subsp. Acyrthosiphon pisum (strain 5AT).